The following is a 130-amino-acid chain: Secreted cysteine-rich effector 2 (130 aa).

Residues 1–23 (MLINAARLLLPAAALVHLSLAWA) form the signal peptide. The segment at 68 to 85 (LKNGEDWCKHCASPRVSV) is plant immunity suppression domain.

It localises to the secreted. It is found in the host cell. The protein resides in the host periplasm. Functionally, secreted effector required for full virulence of U.virens. Inhibits host pathogen-associated molecular pattern-triggered immunity including flg22- and chitin-induced defense gene expression and oxidative burst. The sequence is that of Secreted cysteine-rich effector 2 from Ustilaginoidea virens (Rice false smut fungus).